The following is a 91-amino-acid chain: Histone H1, sperm (91 aa).

A disordered region spans residues 1–25 (PGSPQKRAASPRKSPRKGSPKKSPM). Basic residues predominate over residues 9–20 (ASPRKSPRKGSP). The region spanning 18–91 (GSPKKSPMIR…TGATGRFRVG (74 aa)) is the H15 domain.

This sequence belongs to the histone H1/H5 family.

The protein resides in the nucleus. It is found in the chromosome. Functionally, histones H1 are necessary for the condensation of nucleosome chains into higher-order structures. This is Histone H1, sperm from Sphaerechinus granularis (Purple sea urchin).